The chain runs to 501 residues: UDP-N-acetylmuramoyl-L-alanyl-D-glutamate--2,6-diaminopimelate ligase (501 aa).

Residue serine 29 coordinates UDP-N-acetyl-alpha-D-muramoyl-L-alanyl-D-glutamate. 112-118 is a binding site for ATP; the sequence is GTNGKTS. Residues 161-162, serine 188, and arginine 196 each bind UDP-N-acetyl-alpha-D-muramoyl-L-alanyl-D-glutamate; that span reads TT. The residue at position 228 (lysine 228) is an N6-carboxylysine. Meso-2,6-diaminopimelate-binding positions include arginine 393, 417-420, glycine 468, and glutamate 472; that span reads DNPR. The Meso-diaminopimelate recognition motif signature appears at 417–420; it reads DNPR.

This sequence belongs to the MurCDEF family. MurE subfamily. Mg(2+) is required as a cofactor. In terms of processing, carboxylation is probably crucial for Mg(2+) binding and, consequently, for the gamma-phosphate positioning of ATP.

The protein resides in the cytoplasm. It carries out the reaction UDP-N-acetyl-alpha-D-muramoyl-L-alanyl-D-glutamate + meso-2,6-diaminopimelate + ATP = UDP-N-acetyl-alpha-D-muramoyl-L-alanyl-gamma-D-glutamyl-meso-2,6-diaminopimelate + ADP + phosphate + H(+). The protein operates within cell wall biogenesis; peptidoglycan biosynthesis. In terms of biological role, catalyzes the addition of meso-diaminopimelic acid to the nucleotide precursor UDP-N-acetylmuramoyl-L-alanyl-D-glutamate (UMAG) in the biosynthesis of bacterial cell-wall peptidoglycan. This chain is UDP-N-acetylmuramoyl-L-alanyl-D-glutamate--2,6-diaminopimelate ligase, found in Acidovorax sp. (strain JS42).